The sequence spans 582 residues: Beta-glucosidase 28 (582 aa).

Positions 1-21 (MKMHFFILLVITSWLSEKITS) are cleaved as a signal peptide. Residues Q48, H151, and 196–197 (NE) contribute to the a beta-D-glucoside site. E197 acts as the Proton donor in catalysis. C216 and C224 are oxidised to a cystine. N255 and N330 each carry an N-linked (GlcNAc...) asparagine glycan. Y340 serves as a coordination point for a beta-D-glucoside. N-linked (GlcNAc...) asparagine glycosylation occurs at N370. E412 serves as a coordination point for a beta-D-glucoside. The active-site Nucleophile is the E412. N430 carries N-linked (GlcNAc...) asparagine glycosylation. A beta-D-glucoside contacts are provided by residues W462, 469-470 (EW), and F478. N-linked (GlcNAc...) asparagine glycosylation is found at N521 and N544.

Belongs to the glycosyl hydrolase 1 family.

The enzyme catalyses Hydrolysis of terminal, non-reducing beta-D-glucosyl residues with release of beta-D-glucose.. The polypeptide is Beta-glucosidase 28 (Arabidopsis thaliana (Mouse-ear cress)).